We begin with the raw amino-acid sequence, 861 residues long: Seed linoleate 9S-lipoxygenase-3 (861 aa).

The region spanning 41–166 (QGFDILGSTV…HHKIDRIFFA (126 aa)) is the PLAT domain. The region spanning 169–861 (TYLPSETPAP…FRGIPNSISI (693 aa)) is the Lipoxygenase domain. The tract at residues 215-257 (NPDSGENHARPVLGGSETYPYPRRGRTGRKPTRKDPNSESRSD) is disordered. Over residues 237–246 (RRGRTGRKPT) the composition is skewed to basic residues. The segment covering 247–257 (RKDPNSESRSD) has biased composition (basic and acidic residues). Fe cation-binding residues include H522, H527, H713, N717, and I861.

Belongs to the lipoxygenase family. Requires Fe cation as cofactor.

The protein resides in the cytoplasm. It carries out the reaction (9Z,12Z)-octadecadienoate + O2 = (9S)-hydroperoxy-(10E,12Z)-octadecadienoate. The protein operates within lipid metabolism; oxylipin biosynthesis. Its function is as follows. Plant lipoxygenase may be involved in a number of diverse aspects of plant physiology including growth and development, pest resistance, and senescence or responses to wounding. It catalyzes the hydroperoxidation of lipids containing a cis,cis-1,4-pentadiene structure. In Pisum sativum (Garden pea), this protein is Seed linoleate 9S-lipoxygenase-3 (LOX1.3).